A 395-amino-acid chain; its full sequence is Isoafricanol synthase (395 aa).

Positions 95, 246, 250, and 254 each coordinate Mg(2+). The segment covering 346 to 357 has biased composition (basic and acidic residues); the sequence is TEAVSGGRERPW. A disordered region spans residues 346 to 395; it reads TEAVSGGRERPWARLTGAEDLIRAGRGAPPPPGSGPDTRQPMPSEPSQLA.

This sequence belongs to the terpene synthase family. It depends on Mg(2+) as a cofactor.

The enzyme catalyses (2E,6E)-farnesyl diphosphate + H2O = (+)-isoafricanol + diphosphate. Functionally, catalyzes the cyclization of farnesyl diphosphate (FPP) to isoafricanol. In Streptomyces malaysiensis, this protein is Isoafricanol synthase.